The sequence spans 592 residues: Cell division protein FtsZ (592 aa).

GTP-binding positions include 24 to 28 (GGGGN), 111 to 113 (GTG), E142, R146, and D190. The tract at residues 333–362 (KFQKSVSSVRKNDSGINQTASHPQSSQLRS) is disordered.

The protein belongs to the FtsZ family. Homodimer. Polymerizes to form a dynamic ring structure in a strictly GTP-dependent manner. Interacts directly with several other division proteins.

The protein resides in the cytoplasm. Functionally, essential cell division protein that forms a contractile ring structure (Z ring) at the future cell division site. The regulation of the ring assembly controls the timing and the location of cell division. One of the functions of the FtsZ ring is to recruit other cell division proteins to the septum to produce a new cell wall between the dividing cells. Binds GTP and shows GTPase activity. In Bartonella bacilliformis, this protein is Cell division protein FtsZ.